Reading from the N-terminus, the 312-residue chain is tRNA-cytidine(32) 2-sulfurtransferase (312 aa).

The short motif at 48-53 (SGGKDS) is the PP-loop motif element. [4Fe-4S] cluster contacts are provided by C123, C126, and C214.

This sequence belongs to the TtcA family. Homodimer. The cofactor is Mg(2+). [4Fe-4S] cluster serves as cofactor.

Its subcellular location is the cytoplasm. It catalyses the reaction cytidine(32) in tRNA + S-sulfanyl-L-cysteinyl-[cysteine desulfurase] + AH2 + ATP = 2-thiocytidine(32) in tRNA + L-cysteinyl-[cysteine desulfurase] + A + AMP + diphosphate + H(+). It functions in the pathway tRNA modification. Its function is as follows. Catalyzes the ATP-dependent 2-thiolation of cytidine in position 32 of tRNA, to form 2-thiocytidine (s(2)C32). The sulfur atoms are provided by the cysteine/cysteine desulfurase (IscS) system. The protein is tRNA-cytidine(32) 2-sulfurtransferase of Mannheimia succiniciproducens (strain KCTC 0769BP / MBEL55E).